Reading from the N-terminus, the 1060-residue chain is Centrosomal protein of 131 kDa (1060 aa).

Positions 1–11 (MKGSRTITATP) are enriched in polar residues. The disordered stretch occupies residues 1–96 (MKGSRTITAT…TGSPRPAEPT (96 aa)). Residues 1–244 (MKGSRTITAT…SQSARGTTGL (244 aa)) form an interaction with PLK4 region. S14 and S35 each carry phosphoserine. Composition is skewed to polar residues over residues 32-50 (RPGS…SVAT) and 73-88 (LRRS…SWTG). S47 is modified (phosphoserine; by MAPKAPK2). S78 is subject to Phosphoserine; by MAPKAPK2 and PLK4. S89, S105, S114, S146, and S150 each carry phosphoserine. Disordered stretches follow at residues 136 to 155 (LALP…LGPR) and 217 to 248 (EGGE…LRRR). A compositionally biased stretch (basic and acidic residues) spans 217 to 226 (EGGEGSDLGK). The IQ domain maps to 263-283 (NQAAVTIQRWYRCQVQRRRAG). 2 stretches are compositionally biased toward basic and acidic residues: residues 314–327 (EEAA…EKAR) and 344–363 (KASE…RAPE). The interval 314–437 (EEAARKKARE…VSGSSRGKAR (124 aa)) is disordered. The segment covering 398–408 (ASESSPEQWQS) has biased composition (low complexity). Residues 409–424 (PEDKPQDIHSQGEARQ) are compositionally biased toward basic and acidic residues. T473 bears the Phosphothreonine mark. S481 is subject to Phosphoserine.

The protein belongs to the CEP131 family. Self-associates. Associates with the centriolar satellite BBSome protein complex Interacts with BBS4; the interaction limits BBS4 availability for association with the BBSome complex, and hence negatively regulates ciliary localization of the BBSome complex. Interacts with MIB1. Interacts with PCM1; the interaction increases in response to ultraviolet light (UV) radiation. Associates with microtubule; association to microtubule is reduced in response to cellular stress, such as UV stimulation, in a process that requires p38 MAP kinase signaling. Interacts with CEP290, DCTN1, MAP1LC3B, PCNT, PCM1 and CEP152. Interacts with 14-3-3 proteins following UV-induced phosphorylation by MAPKAPK2; this inhibits formation of novel centriolar satellites. Interacts with SDCCAG8. Interacts with CCDC61. Interacts with PLK4. Ubiquitinated. Undergoes monoubiquitination catalyzed by the E3 ubiquitin-protein ligase MIB1 in proliferating cells, preventing cilia formation. Monoubiquitination by MIB1 is inhibited in response to cellular stress, such as ultraviolet light (UV) radiation or heat shock, resulting in ciliogenesis restoration. In terms of processing, MAPKAPK2-dependent phosphorylation at Ser-47 and Ser-78 occurs in response to cellular stress such as exposure to ultraviolet irradiation and promotes binding to 14-3-3 proteins which leads to cytoplasmic sequestration of CEP131 and blocks formation of new centriolar satellites. Phosphorylation at Ser-78 mediated by PLK4 is essential for proper organization and integrity of centriolar satellites but is dispensable for its localization to centrioles and its function in ciliogenesis. In terms of tissue distribution, localized to the pre-acrosome region of round and elongated spermatids in testis but also present in ovary, brain and adipose tissue.

It localises to the cytoplasm. Its subcellular location is the cytoskeleton. The protein resides in the microtubule organizing center. The protein localises to the centrosome. It is found in the centriolar satellite. It localises to the centriole. Its subcellular location is the cilium basal body. The protein resides in the cytoplasmic vesicle. The protein localises to the secretory vesicle. It is found in the acrosome. Its function is as follows. Component of centriolar satellites contributing to the building of a complex and dynamic network required to regulate cilia/flagellum formation. In proliferating cells, MIB1-mediated ubiquitination induces its sequestration within centriolar satellites, precluding untimely cilia formation initiation. In contrast, during normal and ultraviolet or heat shock cellular stress-induced ciliogenesis, its non-ubiquitinated form is rapidly displaced from centriolar satellites and recruited to centrosome/basal bodies in a microtubule- and p38 MAPK-dependent manner. Also acts as a negative regulator of BBSome ciliary trafficking. Plays a role in sperm flagellar formation; may be involved in the regulation of intraflagellar transport (IFT) and/or intramanchette (IMT) trafficking, which are important for axoneme extension and/or cargo delivery to the nascent sperm tail. Required for optimal cell proliferation and cell cycle progression; may play a role in the regulation of genome stability and centriole duplication in non-ciliogenic cells. Involved in centriole duplication. Required for CEP152, WDR62 and CEP63 centrosomal localization and promotes the centrosomal localization of CDK2. Essential for maintaining proper centriolar satellite integrity. In Mus musculus (Mouse), this protein is Centrosomal protein of 131 kDa (Cep131).